A 182-amino-acid polypeptide reads, in one-letter code: Gremlin-1 (182 aa).

A signal peptide spans 1–24 (MNCLVYALGSLFLLSGLLLPSSEG). The interval 23-65 (EGKKKVSGSQGAIPPPDKGQPNDSEQGQAQPGDRVRGKGKGQA) is disordered. Asn44 carries an N-linked (GlcNAc...) asparagine glycan. 4 disulfides stabilise this stretch: Cys92/Cys142, Cys106/Cys156, Cys116/Cys174, and Cys120/Cys176. One can recognise a CTCK domain in the interval 92–182 (CKTQPLKQTI…QCRCISIDLD (91 aa)).

This sequence belongs to the DAN family.

Its subcellular location is the secreted. Functionally, cytokine that has an axial patterning activity. Acts like BMP antagonist in embryonic explants. Blocks the BMP2 activity. This chain is Gremlin-1 (grem1), found in Xenopus laevis (African clawed frog).